The sequence spans 221 residues: Large ribosomal subunit protein uL4 (221 aa).

Positions 56 to 83 are disordered; sequence HATKTRGMVSGGGRKPWKQKGTGRARQG.

The protein belongs to the universal ribosomal protein uL4 family. As to quaternary structure, part of the 50S ribosomal subunit.

One of the primary rRNA binding proteins, this protein initially binds near the 5'-end of the 23S rRNA. It is important during the early stages of 50S assembly. It makes multiple contacts with different domains of the 23S rRNA in the assembled 50S subunit and ribosome. Its function is as follows. Forms part of the polypeptide exit tunnel. In Bifidobacterium adolescentis (strain ATCC 15703 / DSM 20083 / NCTC 11814 / E194a), this protein is Large ribosomal subunit protein uL4.